Reading from the N-terminus, the 201-residue chain is Dephospho-CoA kinase (201 aa).

The DPCK domain maps to Ser-4–Gln-201. Ala-12–Thr-17 is a binding site for ATP.

Belongs to the CoaE family.

The protein resides in the cytoplasm. The enzyme catalyses 3'-dephospho-CoA + ATP = ADP + CoA + H(+). It participates in cofactor biosynthesis; coenzyme A biosynthesis; CoA from (R)-pantothenate: step 5/5. In terms of biological role, catalyzes the phosphorylation of the 3'-hydroxyl group of dephosphocoenzyme A to form coenzyme A. The polypeptide is Dephospho-CoA kinase (Legionella pneumophila subsp. pneumophila (strain Philadelphia 1 / ATCC 33152 / DSM 7513)).